Reading from the N-terminus, the 380-residue chain is Cytochrome b (380 aa).

The next 4 helical transmembrane spans lie at Phe-34–Met-54, Trp-78–Ile-99, Trp-114–Leu-134, and Phe-179–Thr-199. Heme b-binding residues include His-84 and His-98. The heme b site is built by His-183 and His-197. An a ubiquinone-binding site is contributed by His-202. 4 consecutive transmembrane segments (helical) span residues Leu-227–Thr-247, Leu-289–His-309, Leu-321–Ser-341, and Phe-348–Pro-368.

Belongs to the cytochrome b family. The cytochrome bc1 complex contains 11 subunits: 3 respiratory subunits (MT-CYB, CYC1 and UQCRFS1), 2 core proteins (UQCRC1 and UQCRC2) and 6 low-molecular weight proteins (UQCRH/QCR6, UQCRB/QCR7, UQCRQ/QCR8, UQCR10/QCR9, UQCR11/QCR10 and a cleavage product of UQCRFS1). This cytochrome bc1 complex then forms a dimer. The cofactor is heme b.

It localises to the mitochondrion inner membrane. Component of the ubiquinol-cytochrome c reductase complex (complex III or cytochrome b-c1 complex) that is part of the mitochondrial respiratory chain. The b-c1 complex mediates electron transfer from ubiquinol to cytochrome c. Contributes to the generation of a proton gradient across the mitochondrial membrane that is then used for ATP synthesis. The protein is Cytochrome b (MT-CYB) of Herpetotheres cachinnans (Laughing falcon).